The chain runs to 149 residues: Antitoxin HigA1 (149 aa).

In terms of domain architecture, HTH cro/C1-type spans 42-96 (LIALRKHCQLSQVEVAKRMGVRQPTVSGFEKEPSDPKLSTLQRYARALDARLRLV). Positions 53–72 (QVEVAKRMGVRQPTVSGFEK) form a DNA-binding region, H-T-H motif.

As to quaternary structure, interacts with SecB-like chaperone MT2006.

Functionally, antitoxin component of an atypical, type II toxin-antitoxin chaperone (TAC) system. Probably neutralizes the toxic effects of cognate toxin HigB1, which also requires SecB-like chaperone MT2006 (AC Q7D7P7). Autorepresses its operon (higB1-higA1-MT2006). The polypeptide is Antitoxin HigA1 (Mycobacterium tuberculosis (strain CDC 1551 / Oshkosh)).